The primary structure comprises 127 residues: Aspartate 1-decarboxylase (127 aa).

S25 serves as the catalytic Schiff-base intermediate with substrate; via pyruvic acid. S25 carries the post-translational modification Pyruvic acid (Ser). Position 57 (T57) interacts with substrate. Y58 (proton donor) is an active-site residue. A substrate-binding site is contributed by 73–75 (GAA).

Belongs to the PanD family. In terms of assembly, heterooctamer of four alpha and four beta subunits. It depends on pyruvate as a cofactor. Is synthesized initially as an inactive proenzyme, which is activated by self-cleavage at a specific serine bond to produce a beta-subunit with a hydroxyl group at its C-terminus and an alpha-subunit with a pyruvoyl group at its N-terminus.

It is found in the cytoplasm. It catalyses the reaction L-aspartate + H(+) = beta-alanine + CO2. It functions in the pathway cofactor biosynthesis; (R)-pantothenate biosynthesis; beta-alanine from L-aspartate: step 1/1. Catalyzes the pyruvoyl-dependent decarboxylation of aspartate to produce beta-alanine. This chain is Aspartate 1-decarboxylase, found in Neisseria gonorrhoeae (strain ATCC 700825 / FA 1090).